Here is a 311-residue protein sequence, read N- to C-terminus: Ribosomal RNA small subunit methyltransferase H (311 aa).

Residues 39-41, Asp59, Phe87, Asp102, and His109 each bind S-adenosyl-L-methionine; that span reads GGH.

This sequence belongs to the methyltransferase superfamily. RsmH family.

Its subcellular location is the cytoplasm. The enzyme catalyses cytidine(1402) in 16S rRNA + S-adenosyl-L-methionine = N(4)-methylcytidine(1402) in 16S rRNA + S-adenosyl-L-homocysteine + H(+). Its function is as follows. Specifically methylates the N4 position of cytidine in position 1402 (C1402) of 16S rRNA. This chain is Ribosomal RNA small subunit methyltransferase H, found in Porphyromonas gingivalis (strain ATCC 33277 / DSM 20709 / CIP 103683 / JCM 12257 / NCTC 11834 / 2561).